Reading from the N-terminus, the 552-residue chain is Leiomodin-2 (552 aa).

Residues 1-47 (MSTFGYRRELSKYEDIDEDELLASLTEEELKELERELEDIEPDRNLP) are interaction with tropomyosin alpha. Interaction with actin regions lie at residues 1–169 (MSTF…SSHV) and 170–498 (RHKK…KEIK). Residues 13-46 (YEDIDEDELLASLTEEELKELERELEDIEPDRNL) adopt a coiled-coil conformation. Disordered regions lie at residues 33 to 67 (LERELEDIEPDRNLPVGQRQKSLTEKTPTGTFSRE), 87 to 191 (GACE…DGKD), and 364 to 531 (MDKQ…DNLM). The span at 51–64 (RQKSLTEKTPTGTF) shows a compositional bias: polar residues. A coiled-coil region spans residues 86–151 (LGACEKDSEQ…DDEDEEKQNS (66 aa)). Composition is skewed to acidic residues over residues 93–108 (SEQEEDNSEDIQEECF) and 115–147 (VSEEAYTEEDDEEEEEEEEEEEDEDDSDDEDEE). A compositionally biased stretch (basic and acidic residues) spans 364–377 (MDKQRQKRMQEQRQ). Residues 398-415 (PRSSPYTSPKSSPWSSPK) are compositionally biased toward low complexity. Positions 425–450 (SQPPAPAPPPPPPPPPPPPPPPPPVI) are enriched in pro residues. Residues 478–488 (QKKKKGKKGKK) show a composition bias toward basic residues. A compositionally biased stretch (basic and acidic residues) spans 489-513 (HENSILKEIKDSLKSVSDRKSEEGS). Residues 514–524 (RPSTRPSTPQR) show a composition bias toward polar residues. The segment at 526 to 545 (LHDNLMEAIRASSIKQLRRV) is interaction with actin 3. Residues 526–545 (LHDNLMEAIRASSIKQLRRV) enclose the WH2 domain.

It belongs to the tropomodulin family. As to quaternary structure, can bind at least three actin monomers and thereby provides a nucleus for actin filament formation. Interacts (via N-terminus) with tropomyosin alpha (TPM1) (via N-terminus). May also interact with TPM2 (via N-terminus).

It localises to the cytoplasm. The protein resides in the myofibril. It is found in the sarcomere. The protein localises to the m line. Its subcellular location is the cytoskeleton. Mediates nucleation of actin filaments and thereby promotes actin polymerization. Plays a role in the regulation of actin filament length. Required for normal sarcomere organization in the heart, and for normal heart function. In Gallus gallus (Chicken), this protein is Leiomodin-2 (LMOD2).